The following is a 143-amino-acid chain: Small ribosomal subunit protein uS11c (143 aa).

Belongs to the universal ribosomal protein uS11 family. In terms of assembly, part of the 30S ribosomal subunit.

It is found in the plastid. Its subcellular location is the chloroplast. In Saccharum officinarum (Sugarcane), this protein is Small ribosomal subunit protein uS11c.